The primary structure comprises 370 residues: Protein RKD5 (370 aa).

The interval 193–232 (DSETESEESVNEKTEHSEFENDKTEQSESDAKTEILKKKK) is disordered. A compositionally biased stretch (basic and acidic residues) spans 202–228 (VNEKTEHSEFENDKTEQSESDAKTEIL). The 86-residue stretch at 224 to 309 (KTEILKKKKR…AEKQQEKNEA (86 aa)) folds into the RWP-RK domain. Positions 283 to 328 (HRKIKSLDCLIHDLQREAEKQQEKNEAAAMAVAKKQEKLETEKRNI) form a coiled coil. A disordered region spans residues 347–370 (NFKKRHRASRAKKNQESLVTSSST). A compositionally biased stretch (basic residues) spans 349 to 358 (KKRHRASRAK).

The protein resides in the nucleus. Putative transcription factor. The chain is Protein RKD5 (RKD5) from Arabidopsis thaliana (Mouse-ear cress).